Here is a 76-residue protein sequence, read N- to C-terminus: Large ribosomal subunit protein uL24 (76 aa).

The protein belongs to the universal ribosomal protein uL24 family. As to quaternary structure, part of the 50S ribosomal subunit.

Its function is as follows. One of two assembly initiator proteins, it binds directly to the 5'-end of the 23S rRNA, where it nucleates assembly of the 50S subunit. One of the proteins that surrounds the polypeptide exit tunnel on the outside of the subunit. The sequence is that of Large ribosomal subunit protein uL24 from Wolinella succinogenes (strain ATCC 29543 / DSM 1740 / CCUG 13145 / JCM 31913 / LMG 7466 / NCTC 11488 / FDC 602W) (Vibrio succinogenes).